The sequence spans 533 residues: Glucose-6-phosphate isomerase (533 aa).

E322 serves as the catalytic Proton donor. Residues H351 and K455 contribute to the active site.

This sequence belongs to the GPI family.

It localises to the cytoplasm. It carries out the reaction alpha-D-glucose 6-phosphate = beta-D-fructose 6-phosphate. Its pathway is carbohydrate biosynthesis; gluconeogenesis. It participates in carbohydrate degradation; glycolysis; D-glyceraldehyde 3-phosphate and glycerone phosphate from D-glucose: step 2/4. In terms of biological role, catalyzes the reversible isomerization of glucose-6-phosphate to fructose-6-phosphate. The sequence is that of Glucose-6-phosphate isomerase from Desulfitobacterium hafniense (strain Y51).